Here is a 271-residue protein sequence, read N- to C-terminus: Formamidopyrimidine-DNA glycosylase (271 aa).

P2 functions as the Schiff-base intermediate with DNA in the catalytic mechanism. The Proton donor role is filled by E3. The Proton donor; for beta-elimination activity role is filled by K56. H89, R107, and K151 together coordinate DNA. The FPG-type zinc-finger motif lies at 236–270; sequence NVYGRAGLQCRQCGTPVRLSRQGQRSTYFCPHCQR. R260 serves as the catalytic Proton donor; for delta-elimination activity.

Belongs to the FPG family. Monomer. Requires Zn(2+) as cofactor.

The catalysed reaction is Hydrolysis of DNA containing ring-opened 7-methylguanine residues, releasing 2,6-diamino-4-hydroxy-5-(N-methyl)formamidopyrimidine.. The enzyme catalyses 2'-deoxyribonucleotide-(2'-deoxyribose 5'-phosphate)-2'-deoxyribonucleotide-DNA = a 3'-end 2'-deoxyribonucleotide-(2,3-dehydro-2,3-deoxyribose 5'-phosphate)-DNA + a 5'-end 5'-phospho-2'-deoxyribonucleoside-DNA + H(+). Its function is as follows. Involved in base excision repair of DNA damaged by oxidation or by mutagenic agents. Acts as a DNA glycosylase that recognizes and removes damaged bases. Has a preference for oxidized purines, such as 7,8-dihydro-8-oxoguanine (8-oxoG). Has AP (apurinic/apyrimidinic) lyase activity and introduces nicks in the DNA strand. Cleaves the DNA backbone by beta-delta elimination to generate a single-strand break at the site of the removed base with both 3'- and 5'-phosphates. The chain is Formamidopyrimidine-DNA glycosylase from Acidovorax ebreus (strain TPSY) (Diaphorobacter sp. (strain TPSY)).